A 412-amino-acid chain; its full sequence is Acyl-[acyl-carrier-protein] hydrolase FATB3, chloroplastic (412 aa).

Over residues 1 to 25 the composition is skewed to low complexity; sequence MVAAAASSAFFSFPTPGTSPKPGKF. The N-terminal 50 residues, 1–50, are a transit peptide targeting the chloroplast; sequence MVAAAASSAFFSFPTPGTSPKPGKFGNWPSSLSIPFNPKSNHNGGIQVKA. Positions 1 to 63 are disordered; the sequence is MVAAAASSAF…AHPKANGSAV (63 aa). Over residues 28–44 the composition is skewed to polar residues; that stretch reads WPSSLSIPFNPKSNHNG. Active-site residues include Asn310, His312, and Cys347. The segment at 393 to 412 is disordered; sequence NAGATGAVSTGKTSNGNSVS. Over residues 399-412 the composition is skewed to polar residues; it reads AVSTGKTSNGNSVS.

The protein belongs to the acyl-ACP thioesterase family.

Its subcellular location is the plastid. It localises to the chloroplast. It carries out the reaction tetradecanoyl-[ACP] + H2O = tetradecanoate + holo-[ACP] + H(+). Functionally, plays an essential role in chain termination during de novo fatty acid synthesis. Possesses thioesterase activity for medium chain acyl-ACPs. Main substrate is 14:0. The chain is Acyl-[acyl-carrier-protein] hydrolase FATB3, chloroplastic from Cuphea viscosissima (Blue waxweed).